Consider the following 842-residue polypeptide: Alanine--tRNA ligase (842 aa).

Zn(2+) is bound by residues H549, H553, C650, and H654.

This sequence belongs to the class-II aminoacyl-tRNA synthetase family. Zn(2+) is required as a cofactor.

The protein localises to the cytoplasm. It catalyses the reaction tRNA(Ala) + L-alanine + ATP = L-alanyl-tRNA(Ala) + AMP + diphosphate. Its function is as follows. Catalyzes the attachment of alanine to tRNA(Ala) in a two-step reaction: alanine is first activated by ATP to form Ala-AMP and then transferred to the acceptor end of tRNA(Ala). Also edits incorrectly charged Ser-tRNA(Ala) and Gly-tRNA(Ala) via its editing domain. The chain is Alanine--tRNA ligase from Campylobacter jejuni subsp. doylei (strain ATCC BAA-1458 / RM4099 / 269.97).